Reading from the N-terminus, the 1979-residue chain is Myosin-11 (1979 aa).

Ser2 is subject to Blocked amino end (Ser). The Myosin N-terminal SH3-like domain maps to 30 to 80 (SAKKLVWVPSEKHGFEAASIKEEKGDEVTVELQENGKKVTLSKDDIQKMNP). Residues 84–789 (SKVEDMAELT…VLAHLEEERD (706 aa)) enclose the Myosin motor domain. Lys128 bears the N6,N6,N6-trimethyllysine mark. Residue 177–184 (GESGAGKT) coordinates ATP. Actin-binding regions lie at residues 667 to 689 (LTKL…IPNH) and 768 to 782 (RIGQ…GVLA). The IQ domain occupies 792 to 821 (ITDVIIAFQAQCRGYLARKAFAKRQQQLTA). The segment at 850-1979 (LLQVTRQEEE…DGDFNGKASE (1130 aa)) is rodlike tail (S2 and LMM domains). Positions 850-1979 (LLQVTRQEEE…DGDFNGKASE (1130 aa)) form a coiled coil. Disordered regions lie at residues 1130-1150 (QEDL…KRDL), 1709-1736 (RKQA…LQDE), and 1891-1979 (QLEE…KASE). A compositionally biased stretch (basic and acidic residues) spans 1135–1150 (SEKAARNKAEKQKRDL). Basic and acidic residues predominate over residues 1968–1979 (GRDGDFNGKASE).

This sequence belongs to the TRAFAC class myosin-kinesin ATPase superfamily. Myosin family. Muscle myosin is a hexameric protein that consists of 2 heavy chain subunits (MHC), 2 alkali light chain subunits (MLC) and 2 regulatory light chain subunits (MLC-2).

Its subcellular location is the cytoplasm. It localises to the myofibril. Muscle contraction. This Gallus gallus (Chicken) protein is Myosin-11 (MYH11).